Reading from the N-terminus, the 200-residue chain is UPF0637 protein LCK_01372 (200 aa).

Belongs to the UPF0637 family.

In Leuconostoc citreum (strain KM20), this protein is UPF0637 protein LCK_01372.